A 241-amino-acid polypeptide reads, in one-letter code: Pyridoxine 5'-phosphate synthase (241 aa).

Residue asparagine 7 participates in 3-amino-2-oxopropyl phosphate binding. 9-10 serves as a coordination point for 1-deoxy-D-xylulose 5-phosphate; that stretch reads DH. Residue arginine 18 coordinates 3-amino-2-oxopropyl phosphate. The Proton acceptor role is filled by histidine 43. 1-deoxy-D-xylulose 5-phosphate contacts are provided by arginine 45 and histidine 50. Glutamate 70 (proton acceptor) is an active-site residue. Threonine 100 is a 1-deoxy-D-xylulose 5-phosphate binding site. Histidine 191 acts as the Proton donor in catalysis. Residues glycine 192 and 213-214 each bind 3-amino-2-oxopropyl phosphate; that span reads GH.

The protein belongs to the PNP synthase family. In terms of assembly, homooctamer; tetramer of dimers.

The protein localises to the cytoplasm. The catalysed reaction is 3-amino-2-oxopropyl phosphate + 1-deoxy-D-xylulose 5-phosphate = pyridoxine 5'-phosphate + phosphate + 2 H2O + H(+). Its pathway is cofactor biosynthesis; pyridoxine 5'-phosphate biosynthesis; pyridoxine 5'-phosphate from D-erythrose 4-phosphate: step 5/5. Functionally, catalyzes the complicated ring closure reaction between the two acyclic compounds 1-deoxy-D-xylulose-5-phosphate (DXP) and 3-amino-2-oxopropyl phosphate (1-amino-acetone-3-phosphate or AAP) to form pyridoxine 5'-phosphate (PNP) and inorganic phosphate. The polypeptide is Pyridoxine 5'-phosphate synthase (Solidesulfovibrio magneticus (strain ATCC 700980 / DSM 13731 / RS-1) (Desulfovibrio magneticus)).